The chain runs to 645 residues: Cyclic nucleotide-gated channel rod photoreceptor subunit alpha (645 aa).

Topologically, residues 1–121 (MKVGVIETHH…PAGNMYYNWL (121 aa)) are cytoplasmic. The tract at residues 53 to 100 (NNNSNKDEEKKKKKEKKSKSENKKDGERQKNKEKKEKHKNKDKKKGKE) is disordered. Positions 70-86 (SKSENKKDGERQKNKEK) are enriched in basic and acidic residues. Basic residues predominate over residues 87-96 (KEKHKNKDKK). Residues 122-143 (FCITMPVMYNWTMIIARACFDE) traverse the membrane as a helical segment. Residues 144 to 153 (LQNDYLAVWF) are Extracellular-facing. Residues 154 to 174 (IVDYVSDVIYIADMFVRTRTG) form a helical membrane-spanning segment. The Cytoplasmic segment spans residues 175-199 (YLEQGLLVKEEQKLKEKYKSSLQFK). The chain crosses the membrane as a helical span at residues 200 to 218 (LDFLSIIPTDLLYFKLGLN). Topologically, residues 219–223 (YPELR) are extracellular. A helical transmembrane segment spans residues 224–242 (INRLLRVARMFEFFQRTET). Residues 243-249 (RTNYPNI) are Cytoplasmic-facing. The helical transmembrane segment at 250–273 (FRISNLVMYIVIIIHWNACVYYSI) threads the bilayer. Over 274–296 (SKAIGFGADTWVYPNTSHPEFAR) the chain is Extracellular. 2 consecutive transmembrane segments (helical) span residues 297-331 (LTRK…FFVV) and 332-356 (VDFL…SNMN). At 357–645 (AARAEFQAKI…TDKPGVTKTE (289 aa)) the chain is on the cytoplasmic side. 3',5'-cyclic GMP is bound by residues 439 to 561 (LLVE…DGLL), glutamate 498, and arginine 513.

The protein belongs to the cyclic nucleotide-gated cation channel (TC 1.A.1.5) family.

It is found in the membrane. Functionally, visual signal transduction is mediated by a G-protein coupled cascade using cGMP as second messenger. This protein can be activated by cGMP which leads to an opening of the cation channel and thereby causing a depolarization of rod photoreceptors. The protein is Cyclic nucleotide-gated channel rod photoreceptor subunit alpha of Gallus gallus (Chicken).